Here is a 541-residue protein sequence, read N- to C-terminus: Glucose-6-phosphate isomerase (541 aa).

Catalysis depends on Glu-346, which acts as the Proton donor. Catalysis depends on residues His-377 and Lys-506.

It belongs to the GPI family.

The protein resides in the cytoplasm. The catalysed reaction is alpha-D-glucose 6-phosphate = beta-D-fructose 6-phosphate. The protein operates within carbohydrate biosynthesis; gluconeogenesis. Its pathway is carbohydrate degradation; glycolysis; D-glyceraldehyde 3-phosphate and glycerone phosphate from D-glucose: step 2/4. Functionally, catalyzes the reversible isomerization of glucose-6-phosphate to fructose-6-phosphate. The chain is Glucose-6-phosphate isomerase from Rhizobium etli (strain ATCC 51251 / DSM 11541 / JCM 21823 / NBRC 15573 / CFN 42).